The primary structure comprises 644 residues: Probable lysophospholipase 2 (644 aa).

Residues 1-19 (MYFQSFYFLALLLATAVYG) form the signal peptide. 18 N-linked (GlcNAc...) asparagine glycosylation sites follow: Asn-44, Asn-96, Asn-141, Asn-178, Asn-221, Asn-245, Asn-253, Asn-281, Asn-286, Asn-316, Asn-319, Asn-373, Asn-393, Asn-449, Asn-501, Asn-558, Asn-579, and Asn-596. One can recognise a PLA2c domain in the interval 53–600 (SCDSSEIMVN…SQYCWNGTVD (548 aa)).

This sequence belongs to the lysophospholipase family.

The protein localises to the secreted. The enzyme catalyses a 1-acyl-sn-glycero-3-phosphocholine + H2O = sn-glycerol 3-phosphocholine + a fatty acid + H(+). Its function is as follows. Catalyzes the release of fatty acids from lysophospholipids. In Schizosaccharomyces pombe (strain 972 / ATCC 24843) (Fission yeast), this protein is Probable lysophospholipase 2 (plb2).